Here is a 378-residue protein sequence, read N- to C-terminus: Putative glutamate--cysteine ligase 2 (378 aa).

Belongs to the glutamate--cysteine ligase type 2 family. YbdK subfamily.

It catalyses the reaction L-cysteine + L-glutamate + ATP = gamma-L-glutamyl-L-cysteine + ADP + phosphate + H(+). Its function is as follows. ATP-dependent carboxylate-amine ligase which exhibits weak glutamate--cysteine ligase activity. This is Putative glutamate--cysteine ligase 2 from Bdellovibrio bacteriovorus (strain ATCC 15356 / DSM 50701 / NCIMB 9529 / HD100).